Here is a 54-residue protein sequence, read N- to C-terminus: UPF0391 membrane protein BAV1230 (54 aa).

2 helical membrane-spanning segments follow: residues 5–25 and 27–47; these read AAVF…GIAA and AAGI…LSVL.

It belongs to the UPF0391 family.

It is found in the cell membrane. The polypeptide is UPF0391 membrane protein BAV1230 (Bordetella avium (strain 197N)).